We begin with the raw amino-acid sequence, 847 residues long: Pep5-like zinc finger protein C16A10.03c (847 aa).

One copy of the CHCR repeat lies at 387–526; it reads YIEAIPFSDS…GIWLFNSDPM (140 aa). The RING-type; atypical zinc-finger motif lies at 780–814; sequence CDNCEGLLDVPFVSYSCLHLVHRDCATETVCPKCK.

It is found in the cytoplasm. It localises to the nucleus. The chain is Pep5-like zinc finger protein C16A10.03c from Schizosaccharomyces pombe (strain 972 / ATCC 24843) (Fission yeast).